The primary structure comprises 643 residues: UPF0313 protein CLD_0573 (643 aa).

Positions 295-566 constitute a Radical SAM core domain; it reads AIKEVKFSIT…RMQRALLQFS (272 aa). 3 residues coordinate [4Fe-4S] cluster: Cys-309, Cys-313, and Cys-316. The segment at 598 to 643 is disordered; it reads NKPYKKSHKKNNAKNNNNHYNKNNNKNKDISKKNKKNSLSKHKKRK. Residues 600-609 are compositionally biased toward basic residues; sequence PYKKSHKKNN. Over residues 610–621 the composition is skewed to low complexity; sequence AKNNNNHYNKNN. Over residues 630–643 the composition is skewed to basic residues; the sequence is KNKKNSLSKHKKRK.

The protein belongs to the UPF0313 family. Requires [4Fe-4S] cluster as cofactor.

The polypeptide is UPF0313 protein CLD_0573 (Clostridium botulinum (strain Okra / Type B1)).